Consider the following 466-residue polypeptide: MIKVYNTLNKKKEEFIPLTPGEVKMYVCGPTVYNFFHIGNGRTFIVFDTIRRYFEYRGFKVDFVQNFTDIDDKMIKKANEEGTTVKKIGDTYIKEYYQDADALNIERATVNPRATEFIGEIIKFVKGLVDKGYAYEVDGDVYFSTKKFEGYGKLSGQNIEDLQSGARISVDERKKDPMDFAIWKAQKPGEPAWNSPWGMGRPGWHIECSCMAKKLLGETIDIHAGGSDLKFPHHENEIAQSEALTGEPFARYWLHSAFVNVNNEKMSKSLNNFFTAREILERYDADVIRFLMLSAHYRQQLNFSEDLLESAKASVERIYNAIGNLENLIDEVSREEMNEEEKAYLESLNKYKEKYIEKMDDDFNTADAITAIFDLIKDTNTNITIDSSKELAQKALELIRELGAPLGMFQKSTKGNLEEEIEALIAKRQQARKDRDFTLADKIRDELKDRGIVLEDTPQGVRWKMI.

Cys28 serves as a coordination point for Zn(2+). The 'HIGH' region motif lies at 30 to 40 (PTVYNFFHIGN). Residues Cys208, His233, and Glu237 each contribute to the Zn(2+) site. A 'KMSKS' region motif is present at residues 265-269 (KMSKS). Lys268 lines the ATP pocket.

This sequence belongs to the class-I aminoacyl-tRNA synthetase family. As to quaternary structure, monomer. The cofactor is Zn(2+).

It localises to the cytoplasm. It catalyses the reaction tRNA(Cys) + L-cysteine + ATP = L-cysteinyl-tRNA(Cys) + AMP + diphosphate. The polypeptide is Cysteine--tRNA ligase (Clostridium perfringens (strain ATCC 13124 / DSM 756 / JCM 1290 / NCIMB 6125 / NCTC 8237 / Type A)).